Reading from the N-terminus, the 211-residue chain is Guanylate kinase (211 aa).

The Guanylate kinase-like domain occupies 5-185; that stretch reads GLLLILSSPS…AEEQLKMILS (181 aa). 12–19 provides a ligand contact to ATP; the sequence is SPSGAGKS.

The protein belongs to the guanylate kinase family.

Its subcellular location is the cytoplasm. The catalysed reaction is GMP + ATP = GDP + ADP. Functionally, essential for recycling GMP and indirectly, cGMP. This is Guanylate kinase from Cereibacter sphaeroides (strain ATCC 17023 / DSM 158 / JCM 6121 / CCUG 31486 / LMG 2827 / NBRC 12203 / NCIMB 8253 / ATH 2.4.1.) (Rhodobacter sphaeroides).